We begin with the raw amino-acid sequence, 244 residues long: MNKVEGGGHKEEVVVKEKEVVKEKPSEATAEGVQAGEAKDLPGSLKTQRRKAHREHPPEVLSKLHPLQYRWVLWFFKNDRSRAWQDNLQLVTKFNTVEDFWAVYSHIKLASKLSSGCDYALFKEGILPMWEDNRNKQGGRWLLSIDKQLRHFELDRLWLETLLCLVGNCFEEYSREVCGAVVNIRTKRDKIALWTSEAEDKAGVMQIGQIYKERLGISTKTIIGYQAHADTAAKSNNLANKFVV.

The span at 1 to 26 (MNKVEGGGHKEEVVVKEKEVVKEKPS) shows a compositional bias: basic and acidic residues. The disordered stretch occupies residues 1–57 (MNKVEGGGHKEEVVVKEKEVVKEKPSEATAEGVQAGEAKDLPGSLKTQRRKAHREHP). The interval 65-68 (HPLQ) is EIF4EBP1/2/3 binding. Residue 84–85 (WQ) coordinates mRNA. The EIF4EBP1/2/3 binding stretch occupies residues 101–105 (WAVYS). Position 130 to 131 (130 to 131 (WE)) interacts with mRNA. The tract at residues 160–167 (ETLLCLVG) is EIF4EBP1/2/3 binding. Residues 185–190 (RTKRDK) and 233–235 (AKS) each bind mRNA.

This sequence belongs to the eukaryotic initiation factor 4E family. As to quaternary structure, EIF4F is a multi-subunit complex, the composition of which varies with external and internal environmental conditions. It is composed of at least EIF4A, EIF4E and EIF4G.

In terms of biological role, recognizes and binds the 7-methylguanosine-containing mRNA cap during an early step in the initiation of protein synthesis and facilitates ribosome binding by inducing the unwinding of the mRNAs secondary structures. The polypeptide is Eukaryotic translation initiation factor 4E type 1B (Eif4e1b) (Mus musculus (Mouse)).